The sequence spans 59 residues: Cecropin-C (59 aa).

The first 23 residues, 1–23, serve as a signal peptide directing secretion; it reads MNFKLIFLVALVLMAAFLGQTEG. Val58 is modified (valine amide).

It belongs to the cecropin family.

It is found in the secreted. In terms of biological role, cecropins have lytic and antibacterial activity against several Gram-positive and Gram-negative bacteria. The protein is Cecropin-C (CecC) of Anopheles gambiae (African malaria mosquito).